Reading from the N-terminus, the 193-residue chain is Fibrillarin-like rRNA/tRNA 2'-O-methyltransferase (193 aa).

Residues 82–83, 100–101, 125–126, and 145–148 each bind S-adenosyl-L-methionine; these read TT, EF, DA, and DVAQ.

Belongs to the methyltransferase superfamily. Fibrillarin family. As to quaternary structure, interacts with nop5. Component of box C/D small ribonucleoprotein (sRNP) particles that contain rpl7ae, FlpA and nop5, plus a guide RNA.

Functionally, involved in pre-rRNA and tRNA processing. Utilizes the methyl donor S-adenosyl-L-methionine to catalyze the site-specific 2'-hydroxyl methylation of ribose moieties in rRNA and tRNA. Site specificity is provided by a guide RNA that base pairs with the substrate. Methylation occurs at a characteristic distance from the sequence involved in base pairing with the guide RNA. The protein is Fibrillarin-like rRNA/tRNA 2'-O-methyltransferase of Methanosarcina mazei (Methanosarcina frisia).